Consider the following 323-residue polypeptide: Aspartate carbamoyltransferase catalytic subunit (323 aa).

2 residues coordinate carbamoyl phosphate: R68 and T69. K96 contacts L-aspartate. 3 residues coordinate carbamoyl phosphate: R118, H148, and Q151. Positions 181 and 236 each coordinate L-aspartate. Carbamoyl phosphate contacts are provided by G277 and P278.

This sequence belongs to the aspartate/ornithine carbamoyltransferase superfamily. ATCase family. In terms of assembly, heterododecamer (2C3:3R2) of six catalytic PyrB chains organized as two trimers (C3), and six regulatory PyrI chains organized as three dimers (R2).

It carries out the reaction carbamoyl phosphate + L-aspartate = N-carbamoyl-L-aspartate + phosphate + H(+). It participates in pyrimidine metabolism; UMP biosynthesis via de novo pathway; (S)-dihydroorotate from bicarbonate: step 2/3. Catalyzes the condensation of carbamoyl phosphate and aspartate to form carbamoyl aspartate and inorganic phosphate, the committed step in the de novo pyrimidine nucleotide biosynthesis pathway. The polypeptide is Aspartate carbamoyltransferase catalytic subunit (Verminephrobacter eiseniae (strain EF01-2)).